A 314-amino-acid chain; its full sequence is Olfactory receptor 2Z1 (314 aa).

Residues 1–25 (MGDVNQSVASDFILVGLFSHSGSRQ) are Extracellular-facing. Asn-5 is a glycosylation site (N-linked (GlcNAc...) asparagine). A helical membrane pass occupies residues 26–49 (LLFSLVAVMFVIGLLGNTVLLFLI). Residues 50-57 (RVDSRLHT) are Cytoplasmic-facing. The chain crosses the membrane as a helical span at residues 58 to 79 (PMYFLLSQLSLFDIGCPMVTIP). Over 80-100 (KMASDFLRGEGATSYGGGAAQ) the chain is Extracellular. Residues 101 to 120 (IFFLTLMGVAEGVLLVLMSY) traverse the membrane as a helical segment. At 121-139 (DRYVAVCQPLQYPVLMRRQ) the chain is on the cytoplasmic side. A helical membrane pass occupies residues 140 to 158 (VCLLMMGSSWVVGVLNASI). Residues 159–195 (QTSITLHFPYCASRIVDHFFCEVPALLKLSCADTCAY) lie on the Extracellular side of the membrane. Residues 196–219 (EMALSTSGVLILMLPLSLIATSYG) form a helical membrane-spanning segment. The Cytoplasmic portion of the chain corresponds to 220 to 236 (HVLQAVLSMRSEEARHK). The helical transmembrane segment at 237 to 259 (AVTTCSSHITVVGLFYGAAVFMY) threads the bilayer. Residues 260–272 (MVPCAYHSPQQDN) lie on the Extracellular side of the membrane. A helical membrane pass occupies residues 273–292 (VVSLFYSLVTPTLNPLIYSL). Topologically, residues 293 to 314 (RNPEVWMALVKVLSRAGLRQMC) are cytoplasmic.

Belongs to the G-protein coupled receptor 1 family.

It is found in the cell membrane. Odorant receptor. This is Olfactory receptor 2Z1 (OR2Z1) from Homo sapiens (Human).